Here is a 61-residue protein sequence, read N- to C-terminus: Sperm protamine P1 (61 aa).

The interval 1 to 61 (MARYRHSRSR…RRYSRRRRRY (61 aa)) is disordered.

This sequence belongs to the protamine P1 family. In terms of tissue distribution, testis.

It localises to the nucleus. Its subcellular location is the chromosome. In terms of biological role, protamines substitute for histones in the chromatin of sperm during the haploid phase of spermatogenesis. They compact sperm DNA into a highly condensed, stable and inactive complex. The polypeptide is Sperm protamine P1 (PRM1) (Potorous longipes (Long-footed potoroo)).